A 404-amino-acid polypeptide reads, in one-letter code: Cysteine desulfurase IscS (404 aa).

Pyridoxal 5'-phosphate is bound by residues 75–76, Asn-155, Gln-183, and 203–205; these read AT and SAH. Lys-206 carries the N6-(pyridoxal phosphate)lysine modification. Residue Thr-243 participates in pyridoxal 5'-phosphate binding. Cys-328 serves as the catalytic Cysteine persulfide intermediate. Cys-328 is a binding site for [2Fe-2S] cluster.

Belongs to the class-V pyridoxal-phosphate-dependent aminotransferase family. NifS/IscS subfamily. Homodimer. Forms a heterotetramer with IscU, interacts with other sulfur acceptors. Pyridoxal 5'-phosphate serves as cofactor.

It is found in the cytoplasm. The catalysed reaction is (sulfur carrier)-H + L-cysteine = (sulfur carrier)-SH + L-alanine. It functions in the pathway cofactor biosynthesis; iron-sulfur cluster biosynthesis. In terms of biological role, master enzyme that delivers sulfur to a number of partners involved in Fe-S cluster assembly, tRNA modification or cofactor biosynthesis. Catalyzes the removal of elemental sulfur atoms from cysteine to produce alanine. Functions as a sulfur delivery protein for Fe-S cluster synthesis onto IscU, an Fe-S scaffold assembly protein, as well as other S acceptor proteins. This chain is Cysteine desulfurase IscS, found in Pseudomonas fluorescens (strain Pf0-1).